A 384-amino-acid chain; its full sequence is Anhydro-N-acetylmuramic acid kinase (384 aa).

17–24 (GTSMDGVD) is a binding site for ATP.

It belongs to the anhydro-N-acetylmuramic acid kinase family.

The enzyme catalyses 1,6-anhydro-N-acetyl-beta-muramate + ATP + H2O = N-acetyl-D-muramate 6-phosphate + ADP + H(+). Its pathway is amino-sugar metabolism; 1,6-anhydro-N-acetylmuramate degradation. It functions in the pathway cell wall biogenesis; peptidoglycan recycling. Its function is as follows. Catalyzes the specific phosphorylation of 1,6-anhydro-N-acetylmuramic acid (anhMurNAc) with the simultaneous cleavage of the 1,6-anhydro ring, generating MurNAc-6-P. Is required for the utilization of anhMurNAc either imported from the medium or derived from its own cell wall murein, and thus plays a role in cell wall recycling. The chain is Anhydro-N-acetylmuramic acid kinase from Burkholderia thailandensis (strain ATCC 700388 / DSM 13276 / CCUG 48851 / CIP 106301 / E264).